The following is a 205-amino-acid chain: Transcriptional regulator GfcR (205 aa).

The protein belongs to the purine/pyrimidine phosphoribosyltransferase family. GfcR subfamily.

The polypeptide is Transcriptional regulator GfcR (Methanococcus maripaludis (strain C5 / ATCC BAA-1333)).